Reading from the N-terminus, the 408-residue chain is MVKVNGNYLKLKAGYLFPEIGRRVKAFSSANPEAQLIRLGIGDVTEPLPQACRDAMKSAIDEMGTAEGFHGYGPEQGYAWLREAIARDDFQARGCEISAEEIFVSDGSKCDSSNILDILGSGNRIAVTDPVYPVYVDSNVMAGRTGESGDDGRYGGLTYLPISADNGFAAQIPSEPVDLIYLCYPNNPTGAVATKAQLKKWVDYARANKALILFDAAYEAFIQDPELPHSIYEIEGARDCAIEFRSFSKNAGFTGTRCALTVVPKGLKGKADDGSEVELWGLWNRRQSTKFNGVSYIIQRGAEAVYSDAGKQEVKALVSFYMENAAIIRRELSAAGIEVHGGQHAPYVWLKTPSGMDSWSFFDHLLQKANVVGTPGSGFGAAGEGYFRLSAFNSRSNVDEAMARIRNL.

Residues Y15 and G42 each coordinate substrate. Residues Y72, 108–109, Y132, N187, Y218, and 246–248 each bind pyridoxal 5'-phosphate; these read SK and SFS. Residues K109, Y132, and N187 each coordinate substrate. Residue K249 is modified to N6-(pyridoxal phosphate)lysine. Pyridoxal 5'-phosphate is bound by residues R257 and N292. Substrate is bound by residues N292 and R388.

Belongs to the class-I pyridoxal-phosphate-dependent aminotransferase family. LL-diaminopimelate aminotransferase subfamily. In terms of assembly, homodimer. Pyridoxal 5'-phosphate serves as cofactor.

The enzyme catalyses (2S,6S)-2,6-diaminopimelate + 2-oxoglutarate = (S)-2,3,4,5-tetrahydrodipicolinate + L-glutamate + H2O + H(+). It participates in amino-acid biosynthesis; L-lysine biosynthesis via DAP pathway; LL-2,6-diaminopimelate from (S)-tetrahydrodipicolinate (aminotransferase route): step 1/1. Its function is as follows. Involved in the synthesis of meso-diaminopimelate (m-DAP or DL-DAP), required for both lysine and peptidoglycan biosynthesis. Catalyzes the direct conversion of tetrahydrodipicolinate to LL-diaminopimelate. This chain is LL-diaminopimelate aminotransferase, found in Synechococcus sp. (strain CC9311).